Reading from the N-terminus, the 4451-residue chain is Gramicidin S synthase 2 (4451 aa).

The interval 467–1044 is domain 1 (proline-activating); that stretch reads DKTIHQLFTE…IQEISNYING (578 aa). Carrier domains follow at residues 971 to 1046, 2006 to 2081, 3052 to 3127, and 4090 to 4165; these read VPTN…NGAK, APSS…ADGQ, RPRT…EETD, and APRN…THQE. 4 positions are modified to O-(pantetheine 4'-phosphoryl)serine: serine 1006, serine 2041, serine 3087, and serine 4125. The tract at residues 1521 to 2080 is domain 2 (valine-activating); sequence DHVAVGWKDQ…SALAQYIADG (560 aa). Positions 2538-3135 are domain 3 (ornithine-activating); the sequence is YATNKIFHEL…TDTEQYMAIQ (598 aa). A domain 4 (leucine-activating) region spans residues 3591 to 4173; the sequence is IQELFEEQVK…QESENNVHQP (583 aa).

The protein belongs to the ATP-dependent AMP-binding enzyme family. As to quaternary structure, large multienzyme complex of GrsA and GrsB. Pantetheine 4'-phosphate is required as a cofactor.

It functions in the pathway antibiotic biosynthesis; gramicidin S biosynthesis. Functionally, this protein is a multifunctional enzyme, able to activate and polymerize the amino acids Pro, Val, Orn and Leu. Activation sites for these AA consist of individual domains. This is Gramicidin S synthase 2 (grsB) from Aneurinibacillus migulanus (Bacillus migulanus).